Reading from the N-terminus, the 327-residue chain is Interleukin-12 subunit beta (327 aa).

An N-terminal signal peptide occupies residues 1 to 22; the sequence is MHPQQLVVSWFSLVLLASPIVA. The 84-residue stretch at 23–106 folds into the Ig-like C2-type domain; the sequence is IWELEKNVYI…LSRSLLLLHK (84 aa). Cys-50 and Cys-90 are joined by a disulfide. A glycan (N-linked (GlcNAc...) asparagine) is linked at Asn-223. Residues 238-327 enclose the Fibronectin type-III domain; it reads PPKNLQLKPL…WSEWASVSCS (90 aa).

The protein belongs to the IL-12B family. In terms of assembly, heterodimer with IL12A; disulfide-linked. The heterodimer is known as interleukin IL-12. Heterodimer with IL23A; disulfide-linked. The heterodimer is known as interleukin IL-23. Also secreted as a monomer. Interacts with NBR1; this interaction promotes IL-12 secretion.

Functionally, cytokine that can act as a growth factor for activated T and NK cells, enhance the lytic activity of NK/lymphokine-activated killer cells, and stimulate the production of IFN-gamma by resting PBMC. Associates with IL23A to form the IL-23 interleukin, a heterodimeric cytokine which functions in innate and adaptive immunity. IL-23 may constitute with IL-17 an acute response to infection in peripheral tissues. IL-23 binds to a heterodimeric receptor complex composed of IL12RB1 and IL23R, activates the Jak-Stat signaling cascade, stimulates memory rather than naive T-cells and promotes production of pro-inflammatory cytokines. IL-23 induces autoimmune inflammation and thus may be responsible for autoimmune inflammatory diseases and may be important for tumorigenesis. This Bubalus bubalis (Domestic water buffalo) protein is Interleukin-12 subunit beta (IL12B).